Reading from the N-terminus, the 468-residue chain is UDP-N-acetylmuramoyl-L-alanine--L-glutamate ligase (468 aa).

122–128 contacts ATP; sequence GTKGKST.

This sequence belongs to the MurCDEF family. MurD2 subfamily.

The protein resides in the cytoplasm. It catalyses the reaction UDP-N-acetyl-alpha-D-muramoyl-L-alanine + L-glutamate + ATP = UDP-N-acetyl-alpha-D-muramoyl-L-alanyl-L-glutamate + ADP + phosphate + H(+). It functions in the pathway cell wall biogenesis; peptidoglycan biosynthesis. Its function is as follows. Cell wall formation. Catalyzes the addition of L-glutamate to the nucleotide precursor UDP-N-acetylmuramoyl-L-alanine. This Xanthomonas euvesicatoria pv. vesicatoria (strain 85-10) (Xanthomonas campestris pv. vesicatoria) protein is UDP-N-acetylmuramoyl-L-alanine--L-glutamate ligase.